A 432-amino-acid chain; its full sequence is MSIITDVYAREVLDSRGNPTLEVEVYTESGAFGRGMVPSGASTGEHEAVELRDGDKSRYGGLGTQKAVDNVNNIIAEALIGYDVRDQQAIDKAMIALDGTPNKGKLGANAILGVSIAVARAAADFLEIPLYSYLGGFNTKVLPTPMMNIINGGSHSDAPIAFQEFMIVPAGAPTFKEALRWGAEIFHALKKILKERGLETAVGDEGGFAPKFDGTEDAVETIIKAIETAGYKPGEEVFLGFDCASSEFYDNGVYDYTKFEGEKGAKRSAAEQIDYIEELVNKYPIITIEDAMDENDWDGWKALTARLGDRVQLVGDDFFVTNTDYLARGIKEGAANSILIKVNQIGTLTETFEAIEMAKEAGYTAVVSHRSGETEDSTIADISVATNAGQIKTGSLSRTDRIAKYNQLLRIEDQLGEVAEYRGLKSFYNLKK.

Residue Gln163 coordinates (2R)-2-phosphoglycerate. The Proton donor role is filled by Glu205. Mg(2+)-binding residues include Asp242, Glu289, and Asp316. The (2R)-2-phosphoglycerate site is built by Lys341, Arg370, Ser371, and Lys392. Residue Lys341 is the Proton acceptor of the active site.

It belongs to the enolase family. The cofactor is Mg(2+). Probably phosphorylated.

It is found in the cytoplasm. The protein localises to the secreted. It localises to the cell surface. The enzyme catalyses (2R)-2-phosphoglycerate = phosphoenolpyruvate + H2O. Its pathway is carbohydrate degradation; glycolysis; pyruvate from D-glyceraldehyde 3-phosphate: step 4/5. Functionally, catalyzes the reversible conversion of 2-phosphoglycerate (2-PG) into phosphoenolpyruvate (PEP). It is essential for the degradation of carbohydrates via glycolysis. In terms of biological role, 'Moonlights' as a plasminogen receptor. Binds plasminogen and human salivary mucin MG2 when expressed on the bacterial cell surface, potentially allowing the bacterium to acquire surface-associated proteolytic activity that may help the dissemination through oral tissues and entrance into the blood stream. This Streptococcus mutans serotype c (strain ATCC 700610 / UA159) protein is Enolase.